Reading from the N-terminus, the 358-residue chain is Mannonate dehydratase (358 aa).

It belongs to the mannonate dehydratase family. Fe(2+) serves as cofactor. Mn(2+) is required as a cofactor.

It catalyses the reaction D-mannonate = 2-dehydro-3-deoxy-D-gluconate + H2O. The protein operates within carbohydrate metabolism; pentose and glucuronate interconversion. In terms of biological role, catalyzes the dehydration of D-mannonate. The protein is Mannonate dehydratase of Lactococcus lactis subsp. lactis (strain IL1403) (Streptococcus lactis).